We begin with the raw amino-acid sequence, 1079 residues long: Adhesion G-protein coupled receptor F3 (1079 aa).

The signal sequence occupies residues 1–25; that stretch reads MVCSAAPLLLLATTLPLLGSPVAQA. Residues 26–775 are Extracellular-facing; the sequence is SQPVSETGVR…EEPALALLTQ (750 aa). Residues N188, N264, N301, N382, N441, and N648 are each glycosylated (N-linked (GlcNAc...) asparagine). One can recognise a GAIN-B domain in the interval 599–765; it reads HPFAFSLPNV…SVLMSPHTVP (167 aa). Disulfide bonds link C715–C747 and C734–C749. Residues 715 to 765 form a GPS region; that stretch reads CVFWDHSLFQGRGGWSKEGCQAQVASASPTAQCLCQHLTAFSVLMSPHTVP. Residues 776 to 796 traverse the membrane as a helical segment; the sequence is VGLGASILALLVCLGVYWLVW. The Cytoplasmic portion of the chain corresponds to 797–811; sequence RVVVRNKISYFRHAA. Residues 812–832 form a helical membrane-spanning segment; that stretch reads LLNMVFCLLAADTCFLGAPFL. Topologically, residues 833–851 are extracellular; that stretch reads SPGPRSPLCLAAAFLCHFL. The chain crosses the membrane as a helical span at residues 852–874; that stretch reads YLATFFWMLAQALVLAHQLLFVF. At 875 to 881 the chain is on the cytoplasmic side; the sequence is HQLAKHR. The chain crosses the membrane as a helical span at residues 882-902; it reads VLPLMVLLGYLCPLGLAGVTL. Topologically, residues 903–928 are extracellular; the sequence is GLYLPQGQYLREGECWLDGKGGALYT. Residues 929 to 949 traverse the membrane as a helical segment; it reads FVGPVLAIIGVNGLVLAMAML. Residues 950-973 are Cytoplasmic-facing; that stretch reads KLLRPSLSEGPPAEKRQALLGVIK. Residues 974-994 form a helical membrane-spanning segment; it reads ALLILTPIFGLTWGLGLATLL. Topologically, residues 995–1002 are extracellular; that stretch reads EEVSTVPH. The chain crosses the membrane as a helical span at residues 1003–1023; the sequence is YIFTILNTLQGVFILLFGCLM. Over 1024 to 1079 the chain is Cytoplasmic; that stretch reads DRKIQEALRKRFCRAQAPSSTISLVSCCLQILSCASKSMSEGIPWPSSEDMGTARS.

This sequence belongs to the G-protein coupled receptor 2 family. Adhesion G-protein coupled receptor (ADGR) subfamily. Heterodimer of 2 chains generated by proteolytic processing; the large extracellular N-terminal fragment and the membrane-bound C-terminal fragment predominantly remain associated and non-covalently linked. Autoproteolytically processed at the GPS region of the GAIN-B domain; this cleavage modulates receptor activity.

Its subcellular location is the membrane. Orphan receptor. This Homo sapiens (Human) protein is Adhesion G-protein coupled receptor F3 (ADGRF3).